Here is a 24-residue protein sequence, read N- to C-terminus: Protein YsdE (24 aa).

The sequence is that of Protein YsdE from Escherichia coli (strain K12).